A 1406-amino-acid chain; its full sequence is Sterol 3-beta-glucosyltransferase (1406 aa).

The interval 83–231 (ARFDESSDSD…IHSSHESSTS (149 aa)) is disordered. Polar residues predominate over residues 110-128 (GSSNPVNSQTEQRSGSQTS). Over residues 209 to 231 (SAGRSQNSSQESSIHSSHESSTS) the composition is skewed to low complexity. Residues 236–286 (RLMEMFDFNKPEKVLVEYACSLLQSMLLQGYMYVTEGHICFYAYLPRKSTV) form the GRAM 1 domain. One can recognise a PH domain in the interval 286 to 385 (VAIKSGYLHK…WVKALQKVIF (100 aa)). 2 disordered regions span residues 457 to 558 (ASGH…AESA) and 576 to 622 (LDKR…DGKP). Positions 468–478 (HADRSPRSDRT) are enriched in basic and acidic residues. Polar residues-rich tracts occupy residues 490-499 (GTSQPGNGSA) and 531-548 (SESILNSFEQGTESSAVW). The span at 576–587 (LDKRACSDERSG) shows a compositional bias: basic and acidic residues. A GRAM 2 domain is found at 730–796 (DRFRAHFALP…KDVENVEKEK (67 aa)). 10 residues coordinate UDP-alpha-D-glucose: serine 917, arginine 918, aspartate 920, alanine 1220, histidine 1222, histidine 1235, glycine 1239, threonine 1240, aspartate 1259, and glutamine 1260. Residues 1334-1406 (QRSIASSTPF…LTNSIHGAGR (73 aa)) form a disordered region. Residues 1336-1349 (SIASSTPFSPTPSA) show a composition bias toward low complexity. Over residues 1355 to 1375 (QGDDDVEDSEEWTFVGDDNEM) the composition is skewed to acidic residues. A compositionally biased stretch (basic and acidic residues) spans 1376 to 1387 (DMSRRMRDRAIS). Residues 1397-1406 (LTNSIHGAGR) are compositionally biased toward polar residues.

This sequence belongs to the glycosyltransferase 28 family.

Its subcellular location is the cytoplasm. It is found in the preautophagosomal structure membrane. The catalysed reaction is a sterol + UDP-alpha-D-glucose = a sterol 3-beta-D-glucoside + UDP + H(+). The enzyme catalyses ergosterol + UDP-alpha-D-glucose = ergosteryl 3-beta-D-glucoside + UDP + H(+). In terms of biological role, sterol glycosyltransferase responsible for the glycosylation of ergosterol to form ergosterol-glucoside. This Aspergillus clavatus (strain ATCC 1007 / CBS 513.65 / DSM 816 / NCTC 3887 / NRRL 1 / QM 1276 / 107) protein is Sterol 3-beta-glucosyltransferase.